The primary structure comprises 133 residues: Large ribosomal subunit protein uL14m (133 aa).

The protein belongs to the universal ribosomal protein uL14 family. As to quaternary structure, probably part of the large ribosomal subunit.

Its subcellular location is the hydrogenosome. This Nyctotherus ovalis protein is Large ribosomal subunit protein uL14m (rpl14).